Here is a 467-residue protein sequence, read N- to C-terminus: Dynactin subunit 4 (467 aa).

An N-acetylalanine modification is found at A2. K222 is covalently cross-linked (Glycyl lysine isopeptide (Lys-Gly) (interchain with G-Cter in SUMO2)). T414 is modified (phosphothreonine).

This sequence belongs to the dynactin subunit 4 family. In terms of assembly, subunit of dynactin, a multiprotein complex part of a tripartite complex with dynein and a adapter, such as BICDL1, BICD2 or HOOK3. The dynactin complex is built around ACTR1A/ACTB filament and consists of an actin-related filament composed of a shoulder domain, a pointed end and a barbed end. Its length is defined by its flexible shoulder domain. The soulder is composed of 2 DCTN1 subunits, 4 DCTN2 and 2 DCTN3. The 4 DCNT2 (via N-terminus) bind the ACTR1A filament and act as molecular rulers to determine the length. The pointed end is important for binding dynein-dynactin cargo adapters. Consists of 4 subunits: ACTR10, DCNT4, DCTN5 and DCTN6. The barbed end is composed of a CAPZA1:CAPZB heterodimers, which binds ACTR1A/ACTB filament and dynactin and stabilizes dynactin. Interacts with ATP7B, but not ATP7A, in a copper-dependent manner. Interacts with ANK2; this interaction is required for localization at costameres. Interacts with N4BP2L1.

It is found in the cytoplasm. The protein localises to the cytoskeleton. Its subcellular location is the microtubule organizing center. The protein resides in the centrosome. It localises to the stress fiber. It is found in the cell cortex. The protein localises to the myofibril. Its subcellular location is the sarcomere. Part of the dynactin complex that activates the molecular motor dynein for ultra-processive transport along microtubules. Together with dynein is involved in spindle assembly and cytokinesis. The polypeptide is Dynactin subunit 4 (DCTN4) (Sus scrofa (Pig)).